The primary structure comprises 336 residues: MQEMKPAALSGSNGLNGASGSSVRVPCSRLSRAGRMALDLQSKCAAYVLALRPWSFSASLTPVALGSALAYKLEGSVDLLLLLVCAVAVLLVHGAGNLVNTYYDFSKGIDHKKSDDRTLVDQILKPQDVVMFGAVLYSAGCLCATLLYFLSSLKLEHLALIYFGGLSSSFLYTGGIGLKYVALGDVVILITFGPLAVMFAHAVQVGYLSVLPLVYAVPLALNTEAILHSNNTRDMDSDKQAGIVTLAILLGPTLSYVIYNLLLFVPYLLFCILATRYTISMALPLLTLPMAFPLERQFRCRCYAKIPQKTAKLNLLMGLFYVFGIILAPQGSLPLL.

Positions 1-22 (MQEMKPAALSGSNGLNGASGSS) are disordered. The span at 7–22 (AALSGSNGLNGASGSS) shows a compositional bias: low complexity. Helical transmembrane passes span 79 to 99 (LLLL…GNLV), 129 to 149 (VVMF…LLYF), 158 to 178 (LALI…GIGL), 180 to 200 (YVAL…VMFA), 201 to 221 (HAVQ…PLAL), 254 to 274 (LSYV…CILA), and 315 to 335 (LLMG…SLPL).

Belongs to the UbiA prenyltransferase family.

It is found in the endoplasmic reticulum membrane. It localises to the golgi apparatus membrane. The protein localises to the mitochondrion membrane. The catalysed reaction is menadiol + (2E,6E,10E)-geranylgeranyl diphosphate = menaquinol-4 + diphosphate. The enzyme catalyses all-trans-decaprenyl diphosphate + 4-hydroxybenzoate = 4-hydroxy-3-(all-trans-decaprenyl)benzoate + diphosphate. It functions in the pathway quinol/quinone metabolism; menaquinone biosynthesis. Its pathway is cofactor biosynthesis; ubiquinone biosynthesis. Its function is as follows. Prenyltransferase that mediates the formation of menaquinone-4 (MK-4) and coenzyme Q10. MK-4 is a vitamin K2 isoform required for endothelial cell development. Mediates the conversion of phylloquinone (PK) into MK-4, probably by cleaving the side chain of phylloquinone (PK) to release 2-methyl-1,4-naphthoquinone (menadione; K3) and then prenylating it with geranylgeranyl pyrophosphate (GGPP) to form MK-4. Also plays a role in cardiovascular development independently of MK-4 biosynthesis, by acting as a coenzyme Q10 biosynthetic enzyme: coenzyme Q10, also named ubiquinone, plays an important antioxidant role in the cardiovascular system. Mediates biosynthesis of coenzyme Q10 in the Golgi membrane, leading to protect cardiovascular tissues from nos3/eNOS-dependent oxidative stress. The polypeptide is UbiA prenyltransferase domain-containing protein 1 (ubiad1) (Danio rerio (Zebrafish)).